Reading from the N-terminus, the 380-residue chain is Glutamine synthetase, chloroplastic (380 aa).

The GS beta-grasp domain maps to 35-125 (MAAEYIWADG…VMCEVFAPDG (91 aa)). In terms of domain architecture, GS catalytic spans 132–380 (TRAKLREIID…RLLIKTVLKG (249 aa)).

This sequence belongs to the glutamine synthetase family. As to quaternary structure, homooctamer.

The protein localises to the plastid. Its subcellular location is the chloroplast. The catalysed reaction is L-glutamate + NH4(+) + ATP = L-glutamine + ADP + phosphate + H(+). This is Glutamine synthetase, chloroplastic (GLN2) from Chlamydomonas reinhardtii (Chlamydomonas smithii).